We begin with the raw amino-acid sequence, 238 residues long: Ribonuclease PH (238 aa).

Phosphate is bound by residues arginine 86 and 124–126 (GTR).

The protein belongs to the RNase PH family. Homohexameric ring arranged as a trimer of dimers.

The enzyme catalyses tRNA(n+1) + phosphate = tRNA(n) + a ribonucleoside 5'-diphosphate. Its function is as follows. Phosphorolytic 3'-5' exoribonuclease that plays an important role in tRNA 3'-end maturation. Removes nucleotide residues following the 3'-CCA terminus of tRNAs; can also add nucleotides to the ends of RNA molecules by using nucleoside diphosphates as substrates, but this may not be physiologically important. Probably plays a role in initiation of 16S rRNA degradation (leading to ribosome degradation) during starvation. The chain is Ribonuclease PH from Shigella dysenteriae serotype 1 (strain Sd197).